The primary structure comprises 460 residues: G-protein coupled receptor 22 (460 aa).

Residues 1–74 lie on the Cytoplasmic side of the membrane; it reads MESMPSSLTH…YPVSFQVSLT (74 aa). A helical membrane pass occupies residues 75–95; the sequence is GFLMLEIVLGLSSNLTVLALY. Residues 96-114 lie on the Extracellular side of the membrane; sequence CMKSNLVSSVSNIVTMNLH. The helical transmembrane segment at 115 to 135 threads the bilayer; the sequence is VLDVLVCVGCIPLTIVVVLLP. The Cytoplasmic segment spans residues 136–144; it reads LEGNNALIC. The helical transmembrane segment at 145-165 threads the bilayer; sequence CFHEACVSFASVATAANVLAI. The Extracellular portion of the chain corresponds to 166–185; the sequence is TLDRYDISVRPANRVLTMGR. The helical transmembrane segment at 186–206 threads the bilayer; sequence AVALLGSIWALSFFSFLVPFI. Topologically, residues 207–235 are cytoplasmic; that stretch reads EEGFFSQAGNERNQTEAEEPSNEYYTELG. Residues 236–256 traverse the membrane as a helical segment; sequence LYYHLLAQIPIFFFTAVVMLV. Topologically, residues 257 to 343 are extracellular; the sequence is TYYKILQALN…ERQKRVFRMS (87 aa). Residues 276–286 show a composition bias toward basic residues; it reads VPKKKPRKKKT. A disordered region spans residues 276 to 309; sequence VPKKKPRKKKTISMTSTQPESTDASQSSAGRNAP. Residues 287-305 show a composition bias toward polar residues; the sequence is ISMTSTQPESTDASQSSAG. Residues 344–364 form a helical membrane-spanning segment; the sequence is LLIISTFLLCWTPITVLNTVI. Residues 365–377 lie on the Cytoplasmic side of the membrane; sequence LSVGPSNFTVRLR. A helical transmembrane segment spans residues 378 to 398; it reads LGFLVMAYGTTIFHPLLYAFT. At 399 to 460 the chain is on the extracellular side; the sequence is RQKFQKVLKS…QKCLSSEDVE (62 aa).

Belongs to the G-protein coupled receptor 1 family.

Its subcellular location is the cell membrane. Functionally, orphan G-protein coupled receptor that regulates cilia length and structure in the Kupffer's vesicle leading to the left-right asymmetry development by establishing a directional fluid flow. This is G-protein coupled receptor 22 (gpr22a) from Danio rerio (Zebrafish).